The following is a 204-amino-acid chain: Probable nicotinate-nucleotide adenylyltransferase (204 aa).

The protein belongs to the NadD family.

It catalyses the reaction nicotinate beta-D-ribonucleotide + ATP + H(+) = deamido-NAD(+) + diphosphate. The protein operates within cofactor biosynthesis; NAD(+) biosynthesis; deamido-NAD(+) from nicotinate D-ribonucleotide: step 1/1. Catalyzes the reversible adenylation of nicotinate mononucleotide (NaMN) to nicotinic acid adenine dinucleotide (NaAD). The polypeptide is Probable nicotinate-nucleotide adenylyltransferase (Clostridium beijerinckii (strain ATCC 51743 / NCIMB 8052) (Clostridium acetobutylicum)).